A 189-amino-acid chain; its full sequence is Elongation factor P (189 aa).

This sequence belongs to the elongation factor P family.

It is found in the cytoplasm. Its pathway is protein biosynthesis; polypeptide chain elongation. Its function is as follows. Involved in peptide bond synthesis. Stimulates efficient translation and peptide-bond synthesis on native or reconstituted 70S ribosomes in vitro. Probably functions indirectly by altering the affinity of the ribosome for aminoacyl-tRNA, thus increasing their reactivity as acceptors for peptidyl transferase. The protein is Elongation factor P of Pseudomonas putida (strain GB-1).